A 440-amino-acid chain; its full sequence is Suppressor of cytokine signaling 4 (440 aa).

Residues 1–10 (MAENNENISK) show a composition bias toward polar residues. The interval 1 to 29 (MAENNENISKNVDVRPKTSRSRSADRKDG) is disordered. Basic and acidic residues predominate over residues 12–29 (VDVRPKTSRSRSADRKDG). Positions 286–381 (CYWGVMDKYA…FFEPLLSTPL (96 aa)) constitute an SH2 domain. The SOCS box domain maps to 376–425 (LLSTPLIRTFPFSLQHICRTVICNCTTYDGIDALPIPSSMKLYLKEYHYK).

The protein operates within protein modification; protein ubiquitination. In terms of biological role, SOCS family proteins form part of a classical negative feedback system that regulates cytokine signal transduction. Substrate-recognition component of a SCF-like ECS (Elongin BC-CUL2/5-SOCS-box protein) E3 ubiquitin-protein ligase complex which mediates the ubiquitination and subsequent proteasomal degradation of target proteins. Inhibits EGF signaling by mediating the degradation of the Tyr-phosphorylated EGF receptor/EGFR. The polypeptide is Suppressor of cytokine signaling 4 (SOCS4) (Pongo abelii (Sumatran orangutan)).